Consider the following 144-residue polypeptide: Large ribosomal subunit protein uL15 (144 aa).

Positions 1 to 57 (MELNNLKPAEGSKHAKRRVGRGIGSGLGKTAGRGHKGQKSRSGGFHKVGFEGGQMPL) are disordered. Residues 21-31 (RGIGSGLGKTA) are compositionally biased toward gly residues.

The protein belongs to the universal ribosomal protein uL15 family. In terms of assembly, part of the 50S ribosomal subunit.

Functionally, binds to the 23S rRNA. The chain is Large ribosomal subunit protein uL15 from Paraburkholderia phytofirmans (strain DSM 17436 / LMG 22146 / PsJN) (Burkholderia phytofirmans).